The sequence spans 694 residues: Elongation factor G (694 aa).

Positions 8–287 (EDYRNFGIMA…AVVEFLPAPT (280 aa)) constitute a tr-type G domain. GTP-binding positions include 17–24 (AHIDAGKT), 86–90 (DTPGH), and 140–143 (NKMD).

This sequence belongs to the TRAFAC class translation factor GTPase superfamily. Classic translation factor GTPase family. EF-G/EF-2 subfamily.

The protein localises to the cytoplasm. In terms of biological role, catalyzes the GTP-dependent ribosomal translocation step during translation elongation. During this step, the ribosome changes from the pre-translocational (PRE) to the post-translocational (POST) state as the newly formed A-site-bound peptidyl-tRNA and P-site-bound deacylated tRNA move to the P and E sites, respectively. Catalyzes the coordinated movement of the two tRNA molecules, the mRNA and conformational changes in the ribosome. In Brucella suis (strain ATCC 23445 / NCTC 10510), this protein is Elongation factor G.